The chain runs to 121 residues: Non-structural protein 8 (121 aa).

An N-terminal signal peptide occupies residues 1–15 (MKLLIVFGLLASVYC). Residues 19-121 (ECSIQECCEN…HDVRVVLDFI (103 aa)) enclose the SARS ORF8 Ig-like domain. 3 disulfide bridges follow: cysteine 25/cysteine 90, cysteine 37/cysteine 102, and cysteine 61/cysteine 83.

The chain is Non-structural protein 8 from Bat coronavirus HKU3 (BtCoV).